The chain runs to 230 residues: tRNA (guanine-N(7)-)-methyltransferase (230 aa).

4 residues coordinate S-adenosyl-L-methionine: Glu61, Glu86, Asn113, and Asp136. Residue Asp136 is part of the active site. Residues Lys140, Asp172, and 208–211 (TKYE) contribute to the substrate site.

It belongs to the class I-like SAM-binding methyltransferase superfamily. TrmB family.

It catalyses the reaction guanosine(46) in tRNA + S-adenosyl-L-methionine = N(7)-methylguanosine(46) in tRNA + S-adenosyl-L-homocysteine. The protein operates within tRNA modification; N(7)-methylguanine-tRNA biosynthesis. Catalyzes the formation of N(7)-methylguanine at position 46 (m7G46) in tRNA. The protein is tRNA (guanine-N(7)-)-methyltransferase of Mycobacterium leprae (strain Br4923).